Reading from the N-terminus, the 208-residue chain is MEPELDLTLKLGLPNSTVETHLTLSPPTTTTDQGTNVVDGGEVINHRRGLLGDDEVIHNEPTRNNVEFNIRIYNYVFQQFVGAPNTLNFAPYPMPPSPAPAPETPPVSDEYVLIDVPARRARRNNSTVMTNSWKENATPKRIRGCGGFCGGRIEGMKKCTNMNCNALNTPMWRRGPLGPKSLCNACGIKFRKEEERKAKRNVVIVLDD.

The segment at 155 to 208 (GMKKCTNMNCNALNTPMWRRGPLGPKSLCNACGIKFRKEEERKAKRNVVIVLDD) adopts a GATA-type; atypical zinc-finger fold.

Belongs to the type IV zinc-finger family. Class B subfamily.

The protein localises to the nucleus. In terms of biological role, transcriptional regulator that specifically binds 5'-GATA-3' or 5'-GAT-3' motifs within gene promoters. This chain is GATA transcription factor 29 (GATA29), found in Arabidopsis thaliana (Mouse-ear cress).